The sequence spans 378 residues: Cytochrome b (378 aa).

The next 4 helical transmembrane spans lie at F34–M54, W78–V99, W114–L134, and F179–L199. Heme b contacts are provided by H84 and H98. 2 residues coordinate heme b: H183 and H197. A ubiquinone is bound at residue H202. 4 helical membrane-spanning segments follow: residues F227–S247, L289–N309, I321–A341, and Y348–L368.

This sequence belongs to the cytochrome b family. The main subunits of complex b-c1 are: cytochrome b, cytochrome c1 and the Rieske protein. Heme b is required as a cofactor.

The protein localises to the mitochondrion inner membrane. Component of the ubiquinol-cytochrome c reductase complex (complex III or cytochrome b-c1 complex) that is part of the mitochondrial respiratory chain. The b-c1 complex mediates electron transfer from ubiquinol to cytochrome c. Contributes to the generation of a proton gradient across the mitochondrial membrane that is then used for ATP synthesis. The protein is Cytochrome b (mt:Cyt-b) of Drosophila mauritiana (Fruit fly).